We begin with the raw amino-acid sequence, 418 residues long: eIF5-mimic protein 2 (418 aa).

Over residues 1–14 (MNQKQQKPTLSGQR) the composition is skewed to polar residues. Residues 1 to 25 (MNQKQQKPTLSGQRFKTRKRDEKER) are disordered. The W2 domain maps to 246–413 (NQQTIGARKE…KNAEEESESE (168 aa)).

The protein belongs to the BZW family.

In terms of biological role, translation initiation regulator which may repress repeat-associated non-AUG (RAN) initiated translation probably by acting as a competitive inhibitor of eukaryotic translation initiation factor 5 (EIF5) function. Enhances histone H4 gene transcription but does not seem to bind DNA directly. This Gallus gallus (Chicken) protein is eIF5-mimic protein 2 (BZW1).